A 308-amino-acid polypeptide reads, in one-letter code: Ribosomal RNA small subunit methyltransferase H (308 aa).

Residues 32–34 (GGH), Asp-51, Phe-78, Asp-99, and Gln-106 contribute to the S-adenosyl-L-methionine site.

The protein belongs to the methyltransferase superfamily. RsmH family.

It localises to the cytoplasm. The enzyme catalyses cytidine(1402) in 16S rRNA + S-adenosyl-L-methionine = N(4)-methylcytidine(1402) in 16S rRNA + S-adenosyl-L-homocysteine + H(+). Its function is as follows. Specifically methylates the N4 position of cytidine in position 1402 (C1402) of 16S rRNA. This is Ribosomal RNA small subunit methyltransferase H from Campylobacter curvus (strain 525.92).